The primary structure comprises 128 residues: MTSLFTQEIRLSKRHEKIVSQRLMLLQQMENKPEDQNKGRASQTQAAKAALQRNVSLLKDIEAAEKSLQTRMYPALPPEVAALETLYWASVEEYIPKWEQFLLGRAPYPACSENGNEAEDTIPKRAQQ.

The protein resides in the cell projection. It is found in the cilium. Functionally, may play a role in ciliary assembly. The sequence is that of Centrosomal protein 15 (CEP15) from Bos taurus (Bovine).